Consider the following 1381-residue polypeptide: Hepatocyte growth factor receptor (1381 aa).

The signal sequence occupies residues 1-24; it reads MKAPTVLTPGILVLLFILVQRSNG. Residues 25–932 are Extracellular-facing; it reads ECKEALTKSE…VIVQPDQNFT (908 aa). In terms of domain architecture, Sema spans 27-515; that stretch reads KEALTKSEMN…TGKKITKIPL (489 aa). Asn-45 carries an N-linked (GlcNAc...) asparagine glycan. Intrachain disulfides connect Cys-95/Cys-101, Cys-98/Cys-160, Cys-133/Cys-141, and Cys-172/Cys-175. A glycan (N-linked (GlcNAc...) asparagine) is linked at Asn-106. N-linked (GlcNAc...) asparagine glycosylation is present at Asn-149. Asn-202 carries N-linked (GlcNAc...) asparagine glycosylation. 2 disulfide bridges follow: Cys-298–Cys-363 and Cys-385–Cys-397. Asn-399 is a glycosylation site (N-linked (GlcNAc...) asparagine). Intrachain disulfides connect Cys-520–Cys-538, Cys-526–Cys-561, Cys-529–Cys-545, and Cys-541–Cys-551. 3 consecutive IPT/TIG domains span residues 563-655, 657-739, and 742-836; these read PTIY…FSYV, PIIT…FSYR, and PIVY…LIYV. O-linked (Man) threonine glycosylation occurs at Thr-582. Residues Asn-607 and Asn-635 are each glycosylated (N-linked (GlcNAc...) asparagine). 2 O-linked (Man) threonine glycosylation sites follow: Thr-676 and Thr-761. N-linked (GlcNAc...) asparagine glycans are attached at residues Asn-785, Asn-879, and Asn-930. A helical membrane pass occupies residues 933 to 955; that stretch reads GLIAGVVSISIALLLLLGLFLWL. Topologically, residues 956–1381 are cytoplasmic; the sequence is KKRKQIKDLG…QDNADGEVDT (426 aa). At Ser-966 the chain carries Phosphoserine. Residue Thr-977 is modified to Phosphothreonine. Phosphoserine is present on residues Ser-990, Ser-997, and Ser-1000. Tyr-1003 carries the phosphotyrosine modification. One can recognise a Protein kinase domain in the interval 1078-1345; sequence VHFNEVIGRG…RISAIFSAFI (268 aa). ATP contacts are provided by residues 1084 to 1092 and Lys-1110; that span reads IGRGHFGCV. Catalysis depends on Asp-1204, which acts as the Proton acceptor. Residues 1212-1381 are interaction with RANBP9; that stretch reads LDEKFTVKVA…QDNADGEVDT (170 aa). Tyr-1230 carries the phosphotyrosine modification. Residues Tyr-1234 and Tyr-1235 each carry the phosphotyrosine; by autocatalysis modification. Thr-1289 carries the post-translational modification Phosphothreonine. The interaction with MUC20 stretch occupies residues 1320-1359; it reads WHPKAEMRPSFSELVSRISAIFSAFIGEHYVHVNATYVNV. Phosphotyrosine; by autocatalysis is present on residues Tyr-1349 and Tyr-1356. Tyr-1365 is subject to Phosphotyrosine.

Belongs to the protein kinase superfamily. Tyr protein kinase family. Heterodimer made of an alpha chain (50 kDa) and a beta chain (145 kDa) which are disulfide linked. Binds PLXNB1. Interacts when phosphorylated with downstream effectors including STAT3, PIK3R1, SRC, PCLG1, GRB2 and GAB1. Interacts with SPSB1, SPSB2 and SPSB4. Interacts with INPP5D/SHIP1. When phosphorylated at Tyr-1356, interacts with INPPL1/SHIP2. Interacts with RANBP9 and RANBP10, as well as SPSB1, SPSB2, SPSB3 and SPSB4. SPSB1 binding occurs in the presence and in the absence of HGF, however HGF treatment has a positive effect on this interaction. Interacts with MUC20; prevents interaction with GRB2 and suppresses hepatocyte growth factor-induced cell proliferation. Interacts with GRB10. Interacts with PTPN1 and PTPN2. Interacts with tensin TNS3. Interacts (when phosphorylated) with tensin TNS4 (via SH2 domain); the interaction increases MET protein stability by inhibiting MET endocytosis and subsequent lysosomal degradation. In terms of processing, autophosphorylated in response to ligand binding on Tyr-1234 and Tyr-1235 in the kinase domain leading to further phosphorylation of Tyr-1349 and Tyr-1356 in the C-terminal multifunctional docking site. Dephosphorylated by PTPRJ at Tyr-1349 and Tyr-1365. Dephosphorylated by PTPN1 and PTPN2. Post-translationally, ubiquitinated. Ubiquitination by CBL regulates the receptor stability and activity through proteasomal degradation. O-mannosylation of IPT/TIG domains by TMEM260 is required for protein maturation. O-mannosylated residues are composed of single mannose glycans that are not elongated or modified.

It localises to the membrane. It carries out the reaction L-tyrosyl-[protein] + ATP = O-phospho-L-tyrosyl-[protein] + ADP + H(+). With respect to regulation, in its inactive state, the C-terminal tail interacts with the catalytic domain and inhibits the kinase activity. Upon ligand binding, the C-terminal tail is displaced and becomes phosphorylated, thus increasing the kinase activity. Receptor tyrosine kinase that transduces signals from the extracellular matrix into the cytoplasm by binding to hepatocyte growth factor/HGF ligand. Regulates many physiological processes including proliferation, scattering, morphogenesis and survival. Ligand binding at the cell surface induces autophosphorylation of MET on its intracellular domain that provides docking sites for downstream signaling molecules. Following activation by ligand, interacts with the PI3-kinase subunit PIK3R1, PLCG1, SRC, GRB2, STAT3 or the adapter GAB1. Recruitment of these downstream effectors by MET leads to the activation of several signaling cascades including the RAS-ERK, PI3 kinase-AKT, or PLCgamma-PKC. The RAS-ERK activation is associated with the morphogenetic effects while PI3K/AKT coordinates prosurvival effects. During embryonic development, MET signaling plays a role in gastrulation, development and migration of muscles and neuronal precursors, angiogenesis and kidney formation. In adults, participates in wound healing as well as organ regeneration and tissue remodeling. Also promotes differentiation and proliferation of hematopoietic cells. This chain is Hepatocyte growth factor receptor (MET), found in Ateles geoffroyi (Black-handed spider monkey).